The primary structure comprises 115 residues: Mobilization protein MbeC (115 aa).

To E.coli MbaC and MbkC. Homodimer. Interacts with MbeA and MbeB to form the relaxosome.

In terms of biological role, required for efficient mobilization of ColE1 plasmid and is thus essential to promote the specific transfer of the plasmid during conjugation. Probably functions by inducing DNA bending, helping the MbeA relaxase to melt the DNA around the nic site and cleave the phosphodiester bond. Binds specifically double-stranded DNA (dsDNA) containing the ColE1 oriT but does not recognize the inverted repeat (IR). The polypeptide is Mobilization protein MbeC (mbeC) (Escherichia coli).